Consider the following 146-residue polypeptide: Transcriptional regulator MraZ (146 aa).

SpoVT-AbrB domains lie at 5–51 (NHPT…PLQE) and 80–123 (GQMV…NHEA).

The protein belongs to the MraZ family. Forms oligomers.

The protein localises to the cytoplasm. Its subcellular location is the nucleoid. The protein is Transcriptional regulator MraZ of Acidobacterium capsulatum (strain ATCC 51196 / DSM 11244 / BCRC 80197 / JCM 7670 / NBRC 15755 / NCIMB 13165 / 161).